The following is a 289-amino-acid chain: Transcriptional regulator Rob (289 aa).

In terms of domain architecture, HTH araC/xylS-type spans 8 to 106; that stretch reads RDLLIWLEGH…SQTPALYRRS (99 aa). DNA-binding regions (H-T-H motif) lie at residues 25–46 and 73–96; these read DNVAAKAGYSKWHLQRMFKDVT and ILDIALQYRFDSQQTFTRAFKKQF.

Functionally, transcriptional regulator. Represses transcription of genes belonging to the flagellar regulon, including flhD, flhB and fliC; probably thereby leading to repression of motility. Binds to regulatory regions of target genes, including the promoters of the flhDC operon and of P-type ATPase mgtA. Involved in post-transcriptional regulation of expression. Represses expression of the flhDC operon in a post-transcriptional manner. Binds to the right arm of the replication origin oriC of the chromosome. Rob binding may influence the formation of the nucleoprotein structure, required for oriC function in the initiation of replication. The sequence is that of Transcriptional regulator Rob from Salmonella typhimurium (strain LT2 / SGSC1412 / ATCC 700720).